The sequence spans 568 residues: Urease subunit alpha (568 aa).

A Urease domain is found at 130 to 568; the sequence is GGIDTHIHFI…LPMAQRYFLF (439 aa). 3 residues coordinate Ni(2+): His135, His137, and Lys218. Lys218 carries the N6-carboxylysine modification. Substrate is bound at residue His220. 2 residues coordinate Ni(2+): His247 and His273. His321 serves as the catalytic Proton donor. Residue Asp361 participates in Ni(2+) binding.

It belongs to the metallo-dependent hydrolases superfamily. Urease alpha subunit family. As to quaternary structure, heterotrimer of UreA (gamma), UreB (beta) and UreC (alpha) subunits. Three heterotrimers associate to form the active enzyme. Ni cation is required as a cofactor. Post-translationally, carboxylation allows a single lysine to coordinate two nickel ions.

The protein resides in the cytoplasm. The enzyme catalyses urea + 2 H2O + H(+) = hydrogencarbonate + 2 NH4(+). It participates in nitrogen metabolism; urea degradation; CO(2) and NH(3) from urea (urease route): step 1/1. This Burkholderia mallei (strain NCTC 10247) protein is Urease subunit alpha.